We begin with the raw amino-acid sequence, 310 residues long: 1-aminocyclopropane-1-carboxylate oxidase 1 (310 aa).

The stretch at 113-133 (EELSKTMDEYVCQLHKFAERL) forms a coiled coil. The Fe2OG dioxygenase domain occupies 158–259 (PAFGTKVAKY…RLSIATFYNP (102 aa)). Fe cation-binding residues include histidine 182, aspartate 184, and histidine 240. Residue arginine 250 coordinates 2-oxoglutarate.

This sequence belongs to the iron/ascorbate-dependent oxidoreductase family. Requires Fe(2+) as cofactor.

It catalyses the reaction 1-aminocyclopropane-1-carboxylate + L-ascorbate + O2 = ethene + L-dehydroascorbate + hydrogen cyanide + CO2 + 2 H2O. It participates in alkene biosynthesis; ethylene biosynthesis via S-adenosyl-L-methionine; ethylene from S-adenosyl-L-methionine: step 2/2. Its function is as follows. Enzyme involved in the ethylene biosynthesis. May promote stem elongation by maximizing the extensibility cells, possibly by activating ethylene biosynthesis, in response to very-long-chain fatty acids (VLCFAs C20:0 to C30:0). This chain is 1-aminocyclopropane-1-carboxylate oxidase 1 (ACO1), found in Arabidopsis thaliana (Mouse-ear cress).